A 204-amino-acid polypeptide reads, in one-letter code: Oocyte-specific homeobox protein 1 (204 aa).

Residues 28 to 73 (EPARNLAFQMRQSPLVTPGSTTKSSLSVPERNLLKQESQGPSRQSG) are disordered. Polar residues-rich tracts occupy residues 37-54 (MRQS…SSLS) and 62-72 (KQESQGPSRQS). The homeobox DNA-binding region spans 94–153 (FRKERTVYTKEQQGLLQKHFDECQYPNKKKIVELALSVGVTKREIKIWFKNNRAKYRRMN).

It belongs to the paired homeobox family. Obox subfamily. Specifically expressed in oocytes and early embryos.

It is found in the nucleus. Its function is as follows. Transcription factor required for zygotic genome activation (ZGA), a critical event in early embryonic development during which the developmental control passes from maternally provided mRNAs to the expression of the zygotic genome after fertilization. Together with other Obox family members, required in early two-cell stage embryos to kick-start the major ZGA wave by facilitating RNA Polymerase II 'pre-configuration', during which RNA Polymerase II relocates from the initial one-cell stage binding targets to ZGA gene promoters and distal enhancers. Mechanistically, promotes recruitment of RNA Polymerase II from (CG-rich) non-ZGA genes to (CG-poor) ZGA genes at the two-cell stage. Binds to regulatory DNA sequences containing a 5'-ACNCCTTTAATCCCAG-3' sequence motif. Most maternal and zygotic Obox family proteins can compensate for one another. In addition to its role in ZGA, promotes embryonic stem cell pluripotency. This is Oocyte-specific homeobox protein 1 from Mus musculus (Mouse).